The sequence spans 100 residues: uncharacterized protein (100 aa).

In terms of assembly, may interact with ribosomes.

This is an uncharacterized protein from Saccharomyces cerevisiae (strain ATCC 204508 / S288c) (Baker's yeast).